The primary structure comprises 417 residues: Tyrosine--tRNA ligase (417 aa).

Y34 lines the L-tyrosine pocket. Positions P39 to H48 match the 'HIGH' region motif. L-tyrosine-binding residues include Y165 and Q169. Positions K227–T231 match the 'KMSKS' region motif. K230 contacts ATP. The region spanning A349 to V415 is the S4 RNA-binding domain.

This sequence belongs to the class-I aminoacyl-tRNA synthetase family. TyrS type 1 subfamily. As to quaternary structure, homodimer.

The protein resides in the cytoplasm. It carries out the reaction tRNA(Tyr) + L-tyrosine + ATP = L-tyrosyl-tRNA(Tyr) + AMP + diphosphate + H(+). Functionally, catalyzes the attachment of tyrosine to tRNA(Tyr) in a two-step reaction: tyrosine is first activated by ATP to form Tyr-AMP and then transferred to the acceptor end of tRNA(Tyr). The sequence is that of Tyrosine--tRNA ligase from Limosilactobacillus fermentum (strain NBRC 3956 / LMG 18251) (Lactobacillus fermentum).